A 106-amino-acid chain; its full sequence is Thiosulfate sulfurtransferase GlpE (106 aa).

The Rhodanese domain occupies arginine 16–valine 104. The active-site Cysteine persulfide intermediate is the cysteine 64.

This sequence belongs to the GlpE family.

The protein localises to the cytoplasm. The catalysed reaction is thiosulfate + hydrogen cyanide = thiocyanate + sulfite + 2 H(+). It carries out the reaction thiosulfate + [thioredoxin]-dithiol = [thioredoxin]-disulfide + hydrogen sulfide + sulfite + 2 H(+). Functionally, transferase that catalyzes the transfer of sulfur from thiosulfate to thiophilic acceptors such as cyanide or dithiols. May function in a CysM-independent thiosulfate assimilation pathway by catalyzing the conversion of thiosulfate to sulfite, which can then be used for L-cysteine biosynthesis. The chain is Thiosulfate sulfurtransferase GlpE from Pseudomonas savastanoi pv. phaseolicola (strain 1448A / Race 6) (Pseudomonas syringae pv. phaseolicola (strain 1448A / Race 6)).